The sequence spans 197 residues: Adenine phosphoribosyltransferase (197 aa).

The protein belongs to the purine/pyrimidine phosphoribosyltransferase family. Homodimer.

Its subcellular location is the cytoplasm. The enzyme catalyses AMP + diphosphate = 5-phospho-alpha-D-ribose 1-diphosphate + adenine. It participates in purine metabolism; AMP biosynthesis via salvage pathway; AMP from adenine: step 1/1. In terms of biological role, catalyzes a salvage reaction resulting in the formation of AMP, that is energically less costly than de novo synthesis. This Ralstonia nicotianae (strain ATCC BAA-1114 / GMI1000) (Ralstonia solanacearum) protein is Adenine phosphoribosyltransferase.